Here is a 155-residue protein sequence, read N- to C-terminus: 3-hydroxyacyl-[acyl-carrier-protein] dehydratase FabZ (155 aa).

Histidine 58 is an active-site residue.

This sequence belongs to the thioester dehydratase family. FabZ subfamily.

It localises to the cytoplasm. It carries out the reaction a (3R)-hydroxyacyl-[ACP] = a (2E)-enoyl-[ACP] + H2O. Functionally, involved in unsaturated fatty acids biosynthesis. Catalyzes the dehydration of short chain beta-hydroxyacyl-ACPs and long chain saturated and unsaturated beta-hydroxyacyl-ACPs. This Alkalilimnicola ehrlichii (strain ATCC BAA-1101 / DSM 17681 / MLHE-1) protein is 3-hydroxyacyl-[acyl-carrier-protein] dehydratase FabZ.